We begin with the raw amino-acid sequence, 427 residues long: Tryptophan synthase beta chain 1 (427 aa).

K107 carries the N6-(pyridoxal phosphate)lysine modification.

Belongs to the TrpB family. Tetramer of two alpha and two beta chains. The cofactor is pyridoxal 5'-phosphate.

It catalyses the reaction (1S,2R)-1-C-(indol-3-yl)glycerol 3-phosphate + L-serine = D-glyceraldehyde 3-phosphate + L-tryptophan + H2O. It functions in the pathway amino-acid biosynthesis; L-tryptophan biosynthesis; L-tryptophan from chorismate: step 5/5. In terms of biological role, the beta subunit is responsible for the synthesis of L-tryptophan from indole and L-serine. The chain is Tryptophan synthase beta chain 1 (trpB1) from Aeropyrum pernix (strain ATCC 700893 / DSM 11879 / JCM 9820 / NBRC 100138 / K1).